We begin with the raw amino-acid sequence, 393 residues long: Riboflavin biosynthesis protein RibBA (393 aa).

Residues methionine 1–lysine 200 are DHBP synthase. D-ribulose 5-phosphate-binding positions include arginine 27–glutamate 28, aspartate 32, arginine 139–threonine 143, and glutamate 163. A Mg(2+)-binding site is contributed by glutamate 28. Histidine 142 contacts Mg(2+). A GTP cyclohydrolase II region spans residues leucine 201–isoleucine 393. Arginine 249 to alanine 253 is a binding site for GTP. Zn(2+) is bound by residues cysteine 254, cysteine 265, and cysteine 267. Residues glutamine 270, glutamate 291 to arginine 293, and threonine 313 each bind GTP. Aspartate 325 functions as the Proton acceptor; for GTP cyclohydrolase activity in the catalytic mechanism. Arginine 327 (nucleophile; for GTP cyclohydrolase activity) is an active-site residue. GTP is bound by residues serine 348 and lysine 353.

The protein in the N-terminal section; belongs to the DHBP synthase family. This sequence in the C-terminal section; belongs to the GTP cyclohydrolase II family. It depends on Mg(2+) as a cofactor. Mn(2+) is required as a cofactor. The cofactor is Zn(2+).

It carries out the reaction D-ribulose 5-phosphate = (2S)-2-hydroxy-3-oxobutyl phosphate + formate + H(+). It catalyses the reaction GTP + 4 H2O = 2,5-diamino-6-hydroxy-4-(5-phosphoribosylamino)-pyrimidine + formate + 2 phosphate + 3 H(+). It participates in cofactor biosynthesis; riboflavin biosynthesis; 2-hydroxy-3-oxobutyl phosphate from D-ribulose 5-phosphate: step 1/1. Its pathway is cofactor biosynthesis; riboflavin biosynthesis; 5-amino-6-(D-ribitylamino)uracil from GTP: step 1/4. In terms of biological role, catalyzes the conversion of D-ribulose 5-phosphate to formate and 3,4-dihydroxy-2-butanone 4-phosphate. Its function is as follows. Catalyzes the conversion of GTP to 2,5-diamino-6-ribosylamino-4(3H)-pyrimidinone 5'-phosphate (DARP), formate and pyrophosphate. This Staphylococcus aureus (strain MSSA476) protein is Riboflavin biosynthesis protein RibBA.